A 225-amino-acid chain; its full sequence is MSNETNCTLDFEQSVQLFKEYNLFITAFLLFLTIILQYGYATRSKVIYTLKMIVLWCFWPLNIAVGVISCIYPPNTGGLVAAIILTVFACLSFVGYWIQSIRLFKRCRSWWSFNPESNAVGSILLTNGQQCNFAIESVPMVLSPIIKNGVLYCEGQWLAKCEPDHLPKDIFVCTPDRRNIYRMVQKYTGDQSGNKKRFATFVYAKQSVDTGELESVATGGSSLYT.

Residues 1–20 (MSNETNCTLDFEQSVQLFKE) are Virion surface-facing. 2 N-linked (GlcNAc...) asparagine; by host glycosylation sites follow: Asn3 and Asn6. Residues 21–41 (YNLFITAFLLFLTIILQYGYA) form a helical membrane-spanning segment. The Intravirion segment spans residues 42-51 (TRSKVIYTLK). The helical transmembrane segment at 52–72 (MIVLWCFWPLNIAVGVISCIY) threads the bilayer. The Virion surface segment spans residues 73 to 77 (PPNTG). The helical transmembrane segment at 78–98 (GLVAAIILTVFACLSFVGYWI) threads the bilayer. Topologically, residues 99–225 (QSIRLFKRCR…VATGGSSLYT (127 aa)) are intravirion.

It belongs to the gammacoronaviruses M protein family. Homomultimer. Interacts with envelope E protein in the budding compartment of the host cell, which is located between endoplasmic reticulum and the Golgi complex. Forms a complex with HE and S proteins. Interacts with nucleocapsid N protein. This interaction probably participates in RNA packaging into the virus.

The protein localises to the virion membrane. It localises to the host Golgi apparatus membrane. In terms of biological role, component of the viral envelope that plays a central role in virus morphogenesis and assembly via its interactions with other viral proteins. The protein is Membrane protein of Gallus gallus (Chicken).